The following is a 736-amino-acid chain: NADPH--cytochrome P450 reductase (736 aa).

Residue Met1 is a topological domain, lumenal. The helical transmembrane segment at 2–24 (AVSSSSDVIVLSVGIILAALYLF) threads the bilayer. The Cytoplasmic segment spans residues 25 to 736 (REQIFSAAKP…RNRLLLDVWS (712 aa)). Residues 66–216 (IVIFYGSQTG…DYLEWKDGMW (151 aa)) enclose the Flavodoxin-like domain. FMN-binding positions include 72 to 77 (SQTGTA), 123 to 126 (ATYG), 165 to 174 (LGNKTYEHYN), and Asp200. Residues 269-546 (KNPYPAPIIA…EGPRGAYKQG (278 aa)) enclose the FAD-binding FR-type domain. Arg289 provides a ligand contact to NADP(+). FAD-binding positions include 456–459 (RYYS), 474–476 (TVV), Tyr480, and 495–498 (GVGS). Residues Thr577, 648–649 (SR), and 659–663 (KIYVQ) contribute to the NADP(+) site. FAD is bound at residue Trp735.

The protein belongs to the NADPH--cytochrome P450 reductase family. It in the N-terminal section; belongs to the flavodoxin family. In the C-terminal section; belongs to the flavoprotein pyridine nucleotide cytochrome reductase family. The cofactor is FAD. FMN serves as cofactor.

It is found in the endoplasmic reticulum membrane. It localises to the mitochondrion outer membrane. The protein resides in the cell membrane. It catalyses the reaction 2 oxidized [cytochrome P450] + NADPH = 2 reduced [cytochrome P450] + NADP(+) + H(+). Functionally, this enzyme is required for electron transfer from NADP to cytochrome P450 in microsomes. It can also provide electron transfer to heme oxygenase and cytochrome B5. Involved in ergosterol biosynthesis. This Phanerodontia chrysosporium (White-rot fungus) protein is NADPH--cytochrome P450 reductase (CPR).